The sequence spans 457 residues: Siroheme synthase (457 aa).

The tract at residues 1-204 is precorrin-2 dehydrogenase /sirohydrochlorin ferrochelatase; it reads MDHLPIFCQL…NDQKAITETT (204 aa). Residues 22 to 23 and 43 to 44 each bind NAD(+); these read DV and LA. Ser128 carries the phosphoserine modification. Positions 216–457 are uroporphyrinogen-III C-methyltransferase; it reads GEVVLVGAGP…RDKLNWFSNH (242 aa). Pro225 provides a ligand contact to S-adenosyl-L-methionine. Catalysis depends on Asp248, which acts as the Proton acceptor. Lys270 serves as the catalytic Proton donor. Residues 301–303, Ile306, 331–332, Met382, and Gly411 contribute to the S-adenosyl-L-methionine site; these read GGD and TA.

The protein in the N-terminal section; belongs to the precorrin-2 dehydrogenase / sirohydrochlorin ferrochelatase family. This sequence in the C-terminal section; belongs to the precorrin methyltransferase family.

The enzyme catalyses uroporphyrinogen III + 2 S-adenosyl-L-methionine = precorrin-2 + 2 S-adenosyl-L-homocysteine + H(+). It carries out the reaction precorrin-2 + NAD(+) = sirohydrochlorin + NADH + 2 H(+). It catalyses the reaction siroheme + 2 H(+) = sirohydrochlorin + Fe(2+). Its pathway is cofactor biosynthesis; adenosylcobalamin biosynthesis; precorrin-2 from uroporphyrinogen III: step 1/1. It participates in cofactor biosynthesis; adenosylcobalamin biosynthesis; sirohydrochlorin from precorrin-2: step 1/1. The protein operates within porphyrin-containing compound metabolism; siroheme biosynthesis; precorrin-2 from uroporphyrinogen III: step 1/1. It functions in the pathway porphyrin-containing compound metabolism; siroheme biosynthesis; siroheme from sirohydrochlorin: step 1/1. Its pathway is porphyrin-containing compound metabolism; siroheme biosynthesis; sirohydrochlorin from precorrin-2: step 1/1. In terms of biological role, multifunctional enzyme that catalyzes the SAM-dependent methylations of uroporphyrinogen III at position C-2 and C-7 to form precorrin-2 via precorrin-1. Then it catalyzes the NAD-dependent ring dehydrogenation of precorrin-2 to yield sirohydrochlorin. Finally, it catalyzes the ferrochelation of sirohydrochlorin to yield siroheme. The sequence is that of Siroheme synthase from Shigella dysenteriae serotype 1 (strain Sd197).